The sequence spans 371 residues: MLSHLADLQDYFGPLRLLRYITVRTLLAAVTSLTIGFVIAPWLIAKFRELKLGHGYIDDRTGALGATYFDKKNTPTMGGLIIFLSVFTSAALWAAPNIWVFVSLFVYAALTIPGWRDDYLKVVHKNRNGISSWEKIGWQSLATVVALGLLLWHPASAQKIREFWVPFVKYPLIPHMHWAVLLVLIYLWIVGFSNAINLTDGLDGLAIGCTIPVALVFGIMAYVADHVFLSQYLLTSHVPGTGELAVICGALIGGCMAFLWYNCHPAEVFMGDTGSLALGGLIGVMAFMIHQPLTLVIVGGVFVAEMLSVVVQVGVFKITKRRSGVGRRFFLMAPVHHHFQKKGWPETKVVLRFWVLSLGCALAGLATLKLR.

Transmembrane regions (helical) follow at residues 25-45 (TLLA…WLIA), 77-94 (MGGL…ALWA), 136-156 (IGWQ…HPAS), 172-192 (LIPH…IVGF), 204-224 (GLAI…AYVA), 240-260 (GTGE…AFLW), 269-289 (FMGD…AFMI), 296-316 (VIVG…VGVF), and 348-368 (KVVL…LATL).

This sequence belongs to the glycosyltransferase 4 family. MraY subfamily. It depends on Mg(2+) as a cofactor.

It is found in the cell inner membrane. It catalyses the reaction UDP-N-acetyl-alpha-D-muramoyl-L-alanyl-gamma-D-glutamyl-meso-2,6-diaminopimeloyl-D-alanyl-D-alanine + di-trans,octa-cis-undecaprenyl phosphate = di-trans,octa-cis-undecaprenyl diphospho-N-acetyl-alpha-D-muramoyl-L-alanyl-D-glutamyl-meso-2,6-diaminopimeloyl-D-alanyl-D-alanine + UMP. Its pathway is cell wall biogenesis; peptidoglycan biosynthesis. Functionally, catalyzes the initial step of the lipid cycle reactions in the biosynthesis of the cell wall peptidoglycan: transfers peptidoglycan precursor phospho-MurNAc-pentapeptide from UDP-MurNAc-pentapeptide onto the lipid carrier undecaprenyl phosphate, yielding undecaprenyl-pyrophosphoryl-MurNAc-pentapeptide, known as lipid I. In Opitutus terrae (strain DSM 11246 / JCM 15787 / PB90-1), this protein is Phospho-N-acetylmuramoyl-pentapeptide-transferase.